The following is a 388-amino-acid chain: Putative C-&gt;U-editing enzyme APOBEC-4 (388 aa).

A CMP/dCMP-type deaminase domain is found at 60–176 (PQTKHLTFYE…AWNREALRGL (117 aa)). Residue His-92 participates in Zn(2+) binding. Glu-94 acts as the Proton donor in catalysis. The Zn(2+) site is built by Cys-126 and Cys-133. The disordered stretch occupies residues 322 to 356 (KVKALRKSPSGRPVKKEEARKGSTRSQEANETNKS).

The protein belongs to the cytidine and deoxycytidylate deaminase family. Zn(2+) is required as a cofactor.

In terms of biological role, putative C to U editing enzyme whose physiological substrate is not yet known. This chain is Putative C-&gt;U-editing enzyme APOBEC-4 (Apobec4), found in Rattus norvegicus (Rat).